The sequence spans 30 residues: Cycloviolacin-H4 (30 aa).

The cyclopeptide (Gly-Asn) cross-link spans 1–30; that stretch reads GIPCAESCVWIPCTVTALLGCSCSNNVCYN. 3 disulfides stabilise this stretch: cysteine 4/cysteine 21, cysteine 8/cysteine 23, and cysteine 13/cysteine 28.

Post-translationally, this is a cyclic peptide.

Its function is as follows. Probably participates in a plant defense mechanism. Has potent hemolytic activity. The protein is Cycloviolacin-H4 of Viola hederacea (Australian violet).